The sequence spans 136 residues: Ribosome-binding factor A (136 aa).

Residues 116-136 form a disordered region; the sequence is AGNHKASDEEESDDKGHEDEQ.

It belongs to the RbfA family. In terms of assembly, monomer. Binds 30S ribosomal subunits, but not 50S ribosomal subunits or 70S ribosomes.

Its subcellular location is the cytoplasm. In terms of biological role, one of several proteins that assist in the late maturation steps of the functional core of the 30S ribosomal subunit. Associates with free 30S ribosomal subunits (but not with 30S subunits that are part of 70S ribosomes or polysomes). Required for efficient processing of 16S rRNA. May interact with the 5'-terminal helix region of 16S rRNA. The chain is Ribosome-binding factor A from Lachnoclostridium phytofermentans (strain ATCC 700394 / DSM 18823 / ISDg) (Clostridium phytofermentans).